Reading from the N-terminus, the 561-residue chain is Lysine--tRNA ligase (561 aa).

2 residues coordinate Mg(2+): E409 and E416.

Belongs to the class-II aminoacyl-tRNA synthetase family. In terms of assembly, homodimer. It depends on Mg(2+) as a cofactor.

It localises to the cytoplasm. It catalyses the reaction tRNA(Lys) + L-lysine + ATP = L-lysyl-tRNA(Lys) + AMP + diphosphate. In Nostoc punctiforme (strain ATCC 29133 / PCC 73102), this protein is Lysine--tRNA ligase.